A 328-amino-acid chain; its full sequence is Probable magnesium transporter NIPA6 (328 aa).

Over 1-4 (METD) the chain is Extracellular. The helical transmembrane segment at 5-25 (NGKGLILAVASSVFIGSSFIL) threads the bilayer. Over 26–51 (KKKGLKRAGAIGTRAGYGGYTYLLEP) the chain is Cytoplasmic. Residues 52-72 (LWWAGMVTMIVGEAANFVAYI) form a helical membrane-spanning segment. At 73–76 (YAPA) the chain is on the extracellular side. Residues 77–97 (VLVTPLGALSIIISAVLAHFL) traverse the membrane as a helical segment. The Cytoplasmic segment spans residues 98–104 (LKEKLKK). A helical transmembrane segment spans residues 105–125 (MGVLGCVSCIVGSVVIVIHAP). Topologically, residues 126 to 142 (KEQTPNSVEEIWNLATQ) are extracellular. The chain crosses the membrane as a helical span at residues 143-163 (PAFLIYVAITMSIVLALILHF). The Cytoplasmic portion of the chain corresponds to 164-175 (EPLCGQTNILVY). Residues 176 to 196 (IGICSLMGALTVMSIKAIGIA) form a helical membrane-spanning segment. Residues 197-209 (IKLTMEGVSQIGY) lie on the Extracellular side of the membrane. The chain crosses the membrane as a helical span at residues 210–230 (PQTWLFVMVAVTCVVTQLIYL). Over 231–240 (NKALDTFNAA) the chain is Cytoplasmic. A helical membrane pass occupies residues 241 to 261 (IVSPVYYVMFTTLTIVASAIM). Residues 262–269 (FKDWSGQD) lie on the Extracellular side of the membrane. Residues 270–290 (AASVASELCGFITVLTGTMIL) form a helical membrane-spanning segment. At 291-328 (HGTREEEQQQASSEHVRWYDSRKSMNEEHLVSLYSPEY) the chain is on the cytoplasmic side.

This sequence belongs to the NIPA (TC 2.A.7) family. Homodimer.

The protein resides in the cell membrane. It localises to the early endosome. Functionally, acts as a Mg(2+) transporter. Can also transport other divalent cations such as Fe(2+), Sr(2+), Ba(2+), Mn(2+) and Co(2+) but to a much less extent than Mg(2+). The chain is Probable magnesium transporter NIPA6 from Arabidopsis thaliana (Mouse-ear cress).